Here is a 390-residue protein sequence, read N- to C-terminus: Ammonium/H(+) antiporter subunit AmhT (390 aa).

The next 10 helical transmembrane spans lie at 2–22, 31–51, 52–72, 94–114, 143–163, 178–198, 212–232, 266–286, 288–308, and 351–371; these read VIPELFSAGLILLLLFITGFV, VVIFILLGIAVGGLLSGSHLL, HFAGEVGIVLLFFMLGMEFPL, FGVTMAICMMMGLDVITSLII, FMLGLLIFEDLVAPILVAVLV, LLVVKVVALVAGAVILGVFLF, DLFILFVIGLALMYGGLALYL, LLLPLFFLYFGTTISFSEGIP, IPLLILVLVWSVIAKVIVGVL, and VFILASAMIGILLFQFAPSIA.

The protein belongs to the monovalent cation:proton antiporter 2 (CPA2) transporter (TC 2.A.37) family. In terms of assembly, interacts with AmhM.

It is found in the cell membrane. AmhT alone exhibits antiport activity, but interaction with AmhM confers different properties, such as higher KM for potassium. In terms of biological role, ammonium/proton antiporter that mediates the efflux of ammonium ions. Can also transport potassium or rubidium, but not sodium or lithium. The chain is Ammonium/H(+) antiporter subunit AmhT (amhT) from Alkalihalophilus pseudofirmus (strain ATCC BAA-2126 / JCM 17055 / OF4) (Bacillus pseudofirmus).